A 254-amino-acid chain; its full sequence is Anamorsin homolog (254 aa).

The segment at 4–132 is N-terminal SAM-like domain; sequence VQENNHVLYI…EIGSAAKLSL (129 aa). The tract at residues 132–167 is linker; the sequence is LGGNKAKVAAVWKLDVDDDDDERIDEDELLDEEDKV. Residues Cys177, Cys186, Cys189, and Cys191 each coordinate [2Fe-2S] cluster. Residues 177–191 are fe-S binding site A; that stretch reads CGTTGKRKACKDCSC. Cys215, Cys218, Cys226, and Cys229 together coordinate [4Fe-4S] cluster. Short sequence motifs (cx2C motif) lie at residues 215-218 and 226-229; these read CGSC and CATC. The tract at residues 215–229 is fe-S binding site B; the sequence is CGSCYLGDAFRCATC.

This sequence belongs to the anamorsin family. Monomer. Requires [2Fe-2S] cluster as cofactor. [4Fe-4S] cluster is required as a cofactor.

It is found in the cytoplasm. The protein localises to the mitochondrion intermembrane space. Its function is as follows. Component of the cytosolic iron-sulfur (Fe-S) protein assembly (CIA) machinery. Required for the maturation of extramitochondrial Fe-S proteins. Part of an electron transfer chain functioning in an early step of cytosolic Fe-S biogenesis, facilitating the de novo assembly of a [4Fe-4S] cluster on the cytosolic Fe-S scaffold complex. Electrons are transferred from NADPH via a FAD- and FMN-containing diflavin oxidoreductase. Together with the diflavin oxidoreductase, also required for the assembly of the diferric tyrosyl radical cofactor of ribonucleotide reductase (RNR), probably by providing electrons for reduction during radical cofactor maturation in the catalytic small subunit. This Aedes aegypti (Yellowfever mosquito) protein is Anamorsin homolog.